The chain runs to 96 residues: Small ribosomal subunit protein bS6 (96 aa).

The protein belongs to the bacterial ribosomal protein bS6 family.

In terms of biological role, binds together with bS18 to 16S ribosomal RNA. This Streptococcus uberis (strain ATCC BAA-854 / 0140J) protein is Small ribosomal subunit protein bS6.